The sequence spans 906 residues: Ribonucleoside-diphosphate reductase large subunit-like protein (906 aa).

Disordered regions lie at residues 1 to 70 (MNPA…AGNT) and 89 to 129 (VSWR…LSTF). Positions 98–109 (PDGTPSVLSLTR) are enriched in polar residues.

The protein belongs to the ribonucleoside diphosphate reductase large chain family.

Its subcellular location is the virion. It is found in the host cytoplasm. Its function is as follows. Does not possess a ribonucleotide reductase activity. Betaherpesviruses probably use another strategy to expand the dNTP pool in a quiescent host cell. The sequence is that of Ribonucleoside-diphosphate reductase large subunit-like protein from Homo sapiens (Human).